The chain runs to 429 residues: Probable M18 family aminopeptidase 2 (429 aa).

Positions 82, 156, and 401 each coordinate Zn(2+).

This sequence belongs to the peptidase M18 family. Zn(2+) is required as a cofactor.

The chain is Probable M18 family aminopeptidase 2 from Pseudomonas syringae pv. tomato (strain ATCC BAA-871 / DC3000).